A 63-amino-acid polypeptide reads, in one-letter code: DNA-directed RNA polymerase 7 kDa subunit (63 aa).

The protein belongs to the poxviridae DNA-directed RNA polymerase 7 kDa subunit family. In terms of assembly, the DNA-dependent RNA polymerase (vRNAP) consists of eight subunits encoded by early viral genes and termed according to their apparent molecular masses Rpo147, Rpo132, Rpo35, Rpo30, Rpo22, Rpo19, Rpo18, and Rpo7. The same holoenzyme, with the addition of the transcription-specificity factor RAP94, is used for early gene expression.

The protein resides in the virion. The enzyme catalyses RNA(n) + a ribonucleoside 5'-triphosphate = RNA(n+1) + diphosphate. Functionally, part of the DNA-dependent RNA polymerase which catalyzes the transcription of viral DNA into RNA using the four ribonucleoside triphosphates as substrates. Responsible for the transcription of early, intermediate and late genes. DNA-dependent RNA polymerase associates with the early transcription factor (ETF), itself composed of OPG118 and OPG134, thereby allowing the early genes transcription. Late transcription, and probably also intermediate transcription, require newly synthesized RNA polymerase. The protein is DNA-directed RNA polymerase 7 kDa subunit (OPG090) of Monkeypox virus.